The following is a 233-amino-acid chain: Aspartate/glutamate leucyltransferase (233 aa).

This sequence belongs to the R-transferase family. Bpt subfamily.

Its subcellular location is the cytoplasm. The enzyme catalyses N-terminal L-glutamyl-[protein] + L-leucyl-tRNA(Leu) = N-terminal L-leucyl-L-glutamyl-[protein] + tRNA(Leu) + H(+). The catalysed reaction is N-terminal L-aspartyl-[protein] + L-leucyl-tRNA(Leu) = N-terminal L-leucyl-L-aspartyl-[protein] + tRNA(Leu) + H(+). Its function is as follows. Functions in the N-end rule pathway of protein degradation where it conjugates Leu from its aminoacyl-tRNA to the N-termini of proteins containing an N-terminal aspartate or glutamate. This Vibrio campbellii (strain ATCC BAA-1116) protein is Aspartate/glutamate leucyltransferase.